Reading from the N-terminus, the 365-residue chain is Carboxynorspermidine/carboxyspermidine decarboxylase (365 aa).

Position 37 is an N6-(pyridoxal phosphate)lysine (Lys37). Positions 233 and 269 each coordinate substrate.

Belongs to the Orn/Lys/Arg decarboxylase class-II family. NspC subfamily. Homodimer. Pyridoxal 5'-phosphate serves as cofactor.

Its subcellular location is the cytoplasm. It carries out the reaction carboxynorspermidine + H(+) = norspermidine + CO2. The catalysed reaction is carboxyspermidine + H(+) = spermidine + CO2. Functionally, catalyzes the decarboxylation of carboxynorspermidine and carboxyspermidine. This chain is Carboxynorspermidine/carboxyspermidine decarboxylase, found in Herminiimonas arsenicoxydans.